Reading from the N-terminus, the 204-residue chain is Guanylate kinase (204 aa).

One can recognise a Guanylate kinase-like domain in the interval 5–184 (GLLLVLSGPS…AVDHIKSIVE (180 aa)). ATP is bound at residue 12 to 19 (GPSGVGKG).

Belongs to the guanylate kinase family.

Its subcellular location is the cytoplasm. The enzyme catalyses GMP + ATP = GDP + ADP. In terms of biological role, essential for recycling GMP and indirectly, cGMP. The protein is Guanylate kinase of Lactobacillus johnsonii (strain CNCM I-12250 / La1 / NCC 533).